Consider the following 515-residue polypeptide: Histidine ammonia-lyase (515 aa).

Residues 142–144 constitute a cross-link (5-imidazolinone (Ala-Gly)); it reads ASG. Residue Ser-143 is modified to 2,3-didehydroalanine (Ser).

It belongs to the PAL/histidase family. Contains an active site 4-methylidene-imidazol-5-one (MIO), which is formed autocatalytically by cyclization and dehydration of residues Ala-Ser-Gly.

It is found in the cytoplasm. It catalyses the reaction L-histidine = trans-urocanate + NH4(+). The protein operates within amino-acid degradation; L-histidine degradation into L-glutamate; N-formimidoyl-L-glutamate from L-histidine: step 1/3. The chain is Histidine ammonia-lyase from Bradyrhizobium sp. (strain ORS 278).